The chain runs to 220 residues: NAD(P)H-hydrate epimerase (220 aa).

The region spanning 6-203 (ARHLTTLATG…SFDLPEALFH (198 aa)) is the YjeF N-terminal domain. 53–57 (HNGGV) lines the (6S)-NADPHX pocket. The K(+) site is built by asparagine 54 and aspartate 116. Residues 120–126 (GMRLEGP) and aspartate 149 each bind (6S)-NADPHX. Residue threonine 152 coordinates K(+).

This sequence belongs to the NnrE/AIBP family. K(+) is required as a cofactor.

The enzyme catalyses (6R)-NADHX = (6S)-NADHX. The catalysed reaction is (6R)-NADPHX = (6S)-NADPHX. In terms of biological role, catalyzes the epimerization of the S- and R-forms of NAD(P)HX, a damaged form of NAD(P)H that is a result of enzymatic or heat-dependent hydration. This is a prerequisite for the S-specific NAD(P)H-hydrate dehydratase to allow the repair of both epimers of NAD(P)HX. The protein is NAD(P)H-hydrate epimerase of Truepera radiovictrix (strain DSM 17093 / CIP 108686 / LMG 22925 / RQ-24).